A 155-amino-acid polypeptide reads, in one-letter code: Large ribosomal subunit protein uL22c (155 aa).

It belongs to the universal ribosomal protein uL22 family. Part of the 50S ribosomal subunit.

The protein resides in the plastid. The protein localises to the chloroplast. Functionally, this protein binds specifically to 23S rRNA. Its function is as follows. The globular domain of the protein is located near the polypeptide exit tunnel on the outside of the subunit, while an extended beta-hairpin is found that lines the wall of the exit tunnel in the center of the 70S ribosome. The chain is Large ribosomal subunit protein uL22c (rpl22) from Nicotiana tomentosiformis (Tobacco).